Consider the following 85-residue polypeptide: Cell division topological specificity factor (85 aa).

The protein belongs to the MinE family.

Functionally, prevents the cell division inhibition by proteins MinC and MinD at internal division sites while permitting inhibition at polar sites. This ensures cell division at the proper site by restricting the formation of a division septum at the midpoint of the long axis of the cell. This is Cell division topological specificity factor from Dechloromonas aromatica (strain RCB).